Here is a 549-residue protein sequence, read N- to C-terminus: Dihydroxy-acid dehydratase (549 aa).

Asp78 contacts Mg(2+). Cys119 is a [2Fe-2S] cluster binding site. Mg(2+) contacts are provided by Asp120 and Lys121. Position 121 is an N6-carboxylysine (Lys121). A [2Fe-2S] cluster-binding site is contributed by Cys191. Glu441 is a Mg(2+) binding site. Residue Ser466 is the Proton acceptor of the active site.

This sequence belongs to the IlvD/Edd family. As to quaternary structure, homodimer. Requires [2Fe-2S] cluster as cofactor. It depends on Mg(2+) as a cofactor.

It catalyses the reaction (2R)-2,3-dihydroxy-3-methylbutanoate = 3-methyl-2-oxobutanoate + H2O. The enzyme catalyses (2R,3R)-2,3-dihydroxy-3-methylpentanoate = (S)-3-methyl-2-oxopentanoate + H2O. It functions in the pathway amino-acid biosynthesis; L-isoleucine biosynthesis; L-isoleucine from 2-oxobutanoate: step 3/4. It participates in amino-acid biosynthesis; L-valine biosynthesis; L-valine from pyruvate: step 3/4. In terms of biological role, functions in the biosynthesis of branched-chain amino acids. Catalyzes the dehydration of (2R,3R)-2,3-dihydroxy-3-methylpentanoate (2,3-dihydroxy-3-methylvalerate) into 2-oxo-3-methylpentanoate (2-oxo-3-methylvalerate) and of (2R)-2,3-dihydroxy-3-methylbutanoate (2,3-dihydroxyisovalerate) into 2-oxo-3-methylbutanoate (2-oxoisovalerate), the penultimate precursor to L-isoleucine and L-valine, respectively. The chain is Dihydroxy-acid dehydratase from Methanothermobacter thermautotrophicus (strain ATCC 29096 / DSM 1053 / JCM 10044 / NBRC 100330 / Delta H) (Methanobacterium thermoautotrophicum).